Reading from the N-terminus, the 507-residue chain is Glutamyl-tRNA(Gln) amidotransferase subunit A, mitochondrial (507 aa).

A disordered region spans residues 29 to 51; that stretch reads THPPEPIPPPPPPAPSSSPSPKQ. Over residues 31 to 46 the composition is skewed to pro residues; that stretch reads PPEPIPPPPPPAPSSS. Residues K57 and S135 each act as charge relay system in the active site. S159 functions as the Acyl-ester intermediate in the catalytic mechanism.

It belongs to the amidase family. GatA subfamily. In terms of assembly, subunit of the heterotrimeric GatCAB amidotransferase (AdT) complex, composed of A, B and C subunits.

The protein localises to the mitochondrion. The catalysed reaction is L-glutamyl-tRNA(Gln) + L-glutamine + ATP + H2O = L-glutaminyl-tRNA(Gln) + L-glutamate + ADP + phosphate + H(+). Allows the formation of correctly charged Gln-tRNA(Gln) through the transamidation of misacylated Glu-tRNA(Gln) in the mitochondria. The reaction takes place in the presence of glutamine and ATP through an activated gamma-phospho-Glu-tRNA(Gln). In Podospora anserina (strain S / ATCC MYA-4624 / DSM 980 / FGSC 10383) (Pleurage anserina), this protein is Glutamyl-tRNA(Gln) amidotransferase subunit A, mitochondrial.